The following is a 381-amino-acid chain: Alcohol dehydrogenase-like 6 (381 aa).

Residues Cys-53, Ser-55, His-72, Cys-102, Cys-105, Cys-108, Cys-116, and Cys-179 each coordinate Zn(2+). An alcohol is bound by residues Ser-55 and His-72. Ser-55 provides a ligand contact to NAD(+). Residues 204 to 209 (GLGTVG), Asp-228, Lys-233, 297 to 299 (LGV), Phe-324, and Arg-374 contribute to the NAD(+) site.

This sequence belongs to the zinc-containing alcohol dehydrogenase family. Class-III subfamily. As to quaternary structure, homodimer. Zn(2+) is required as a cofactor.

The protein resides in the cytoplasm. The catalysed reaction is a primary alcohol + NAD(+) = an aldehyde + NADH + H(+). It carries out the reaction a secondary alcohol + NAD(+) = a ketone + NADH + H(+). This is Alcohol dehydrogenase-like 6 from Arabidopsis thaliana (Mouse-ear cress).